Reading from the N-terminus, the 529-residue chain is Basal body-orientation factor 1 (529 aa).

The segment covering 1-13 (MPSKGKDKKKGKS) has biased composition (basic residues). A disordered region spans residues 1–22 (MPSKGKDKKKGKSKGKDTKKLI). 2 coiled-coil regions span residues 85-201 (LKKQ…EAEK) and 271-361 (VKEK…EVER).

It belongs to the BBOF1 family. In terms of assembly, interacts with MNS1 and ODF2.

The protein resides in the cytoplasm. It localises to the cytoskeleton. It is found in the cilium basal body. Its subcellular location is the flagellum axoneme. Its function is as follows. Plays an essential role in sperm motility and male fertility by stabilizing the sperm flagellar axonemal structure. May be required for the stability of ODF2 and MANS1 proteins. Dispensable for the assembly and function of motile cilia. This is Basal body-orientation factor 1 from Homo sapiens (Human).